A 465-amino-acid polypeptide reads, in one-letter code: Antithrombin-III (465 aa).

An N-terminal signal peptide occupies residues 1-32 (MYSPGAGSGAAGERKLCLLSLLLIGALGCAIC). Disulfide bonds link C41/C161 and C54/C128. Phosphothreonine is present on T64. The residue at position 69 (S69) is a Phosphoserine. W82 provides a ligand contact to heparin. N-linked (GlcNAc...) asparagine glycosylation occurs at N129. R162 contributes to the heparin binding site. An N-linked (GlcNAc...) asparagine glycan is attached at N168. R178 contributes to the heparin binding site. N-linked (GlcNAc...) asparagine glycans are attached at residues N188 and N225. Cysteines 280 and 463 form a disulfide.

Belongs to the serpin family. As to quaternary structure, forms protease inhibiting heterodimer with TMPRSS7. Post-translationally, phosphorylated by FAM20C in the extracellular medium. Plasma.

Its subcellular location is the secreted. It localises to the extracellular space. Most important serine protease inhibitor in plasma that regulates the blood coagulation cascade. AT-III inhibits thrombin, matriptase-3/TMPRSS7, as well as factors IXa, Xa and XIa. Its inhibitory activity is greatly enhanced in the presence of heparin. In Mus musculus (Mouse), this protein is Antithrombin-III (Serpinc1).